The sequence spans 131 residues: Large ribosomal subunit protein bL19 (131 aa).

Polar residues predominate over residues M1–P11. A disordered region spans residues M1–A20.

It belongs to the bacterial ribosomal protein bL19 family.

Functionally, this protein is located at the 30S-50S ribosomal subunit interface and may play a role in the structure and function of the aminoacyl-tRNA binding site. This chain is Large ribosomal subunit protein bL19, found in Dehalococcoides mccartyi (strain ATCC BAA-2100 / JCM 16839 / KCTC 5957 / BAV1).